A 101-amino-acid chain; its full sequence is Small ribosomal subunit protein uS14 (101 aa).

The protein belongs to the universal ribosomal protein uS14 family. As to quaternary structure, part of the 30S ribosomal subunit. Contacts proteins S3 and S10.

In terms of biological role, binds 16S rRNA, required for the assembly of 30S particles and may also be responsible for determining the conformation of the 16S rRNA at the A site. The chain is Small ribosomal subunit protein uS14 from Alcanivorax borkumensis (strain ATCC 700651 / DSM 11573 / NCIMB 13689 / SK2).